The primary structure comprises 446 residues: UDP-N-acetylmuramoylalanine--D-glutamate ligase (446 aa).

115–121 (GSNGKST) provides a ligand contact to ATP.

Belongs to the MurCDEF family.

Its subcellular location is the cytoplasm. The enzyme catalyses UDP-N-acetyl-alpha-D-muramoyl-L-alanine + D-glutamate + ATP = UDP-N-acetyl-alpha-D-muramoyl-L-alanyl-D-glutamate + ADP + phosphate + H(+). The protein operates within cell wall biogenesis; peptidoglycan biosynthesis. Its function is as follows. Cell wall formation. Catalyzes the addition of glutamate to the nucleotide precursor UDP-N-acetylmuramoyl-L-alanine (UMA). The protein is UDP-N-acetylmuramoylalanine--D-glutamate ligase of Hahella chejuensis (strain KCTC 2396).